An 847-amino-acid chain; its full sequence is Endo-beta-N-acetylglucosaminidase EndoSd (847 aa).

The N-terminal stretch at 1-36 is a signal peptide; it reads MDKRLLVKRTLGCVCAATLMGAILATHHDSLISVKA. The GH18 domain occupies 65–377; the sequence is PLYAGYFRTW…HPVVDNISHT (313 aa). An a glycoprotein-binding site is contributed by His-107. Glu-186 serves as the catalytic Proton donor. Residues Glu-188, Gln-250, Tyr-252, Glu-288, Glu-289, Asn-295, and Tyr-339 each coordinate a glycoprotein. LRR repeat units lie at residues 423 to 446, 447 to 470, 483 to 506, and 507 to 530; these read LERY…LEKL, SHLQ…ILPE, MTGL…DVNG, and LTHL…ADRK. A carbohydrate-binding module (CBM) region spans residues 683–836; that stretch reads MENLAKGAKV…YTELQILGQR (154 aa). Residues Lys-704, Asp-707, and Glu-829 each coordinate Ca(2+).

It belongs to the glycosyl hydrolase 18 family.

Its subcellular location is the secreted. The protein resides in the host extracellular space. It catalyses the reaction an N(4)-(oligosaccharide-(1-&gt;3)-[oligosaccharide-(1-&gt;6)]-beta-D-Man-(1-&gt;4)-beta-D-GlcNAc-(1-&gt;4)-alpha-D-GlcNAc)-L-asparaginyl-[protein] + H2O = an oligosaccharide-(1-&gt;3)-[oligosaccharide-(1-&gt;6)]-beta-D-Man-(1-&gt;4)-D-GlcNAc + N(4)-(N-acetyl-beta-D-glucosaminyl)-L-asparaginyl-[protein]. Functionally, endoglucosidase that acts as a host immune evasion factor by mediating hydrolysis of the N-linked glycan from the Fc region of host immunoglobulin-gamma (IgG) during infection. Specifically catalyzes the hydrolysis of the beta-1,4 linkage between the first two N-acetylglucosamine residues of the complex-type N-linked glycan located on 'Asn-297' of the Fc region of IgG antibodies (IGHG1, IGHG2, IGHG3 or IGHG4), thereby preventing interaction between IgGs and Fc receptors and ability to activate the complement pathway. Shows a specificity for biantennary complex type N-glycans; does neither cleave larger complex type glycans nor oligomannose and nor hybrid-type glycans. Specifically acts on IgGs; does not act on immunoglobulin alpha, beta, delta or mu. The chain is Endo-beta-N-acetylglucosaminidase EndoSd from Streptococcus dysgalactiae.